A 67-amino-acid chain; its full sequence is DNA-directed RNA polymerase subunit omega (67 aa).

It belongs to the RNA polymerase subunit omega family. As to quaternary structure, the RNAP catalytic core consists of 2 alpha, 1 beta, 1 beta' and 1 omega subunit. When a sigma factor is associated with the core the holoenzyme is formed, which can initiate transcription.

It carries out the reaction RNA(n) + a ribonucleoside 5'-triphosphate = RNA(n+1) + diphosphate. Its function is as follows. Promotes RNA polymerase assembly. Latches the N- and C-terminal regions of the beta' subunit thereby facilitating its interaction with the beta and alpha subunits. This is DNA-directed RNA polymerase subunit omega from Cupriavidus metallidurans (strain ATCC 43123 / DSM 2839 / NBRC 102507 / CH34) (Ralstonia metallidurans).